Reading from the N-terminus, the 502-residue chain is Lysine--tRNA ligase (502 aa).

2 residues coordinate Mg(2+): Glu-413 and Glu-420.

This sequence belongs to the class-II aminoacyl-tRNA synthetase family. In terms of assembly, homodimer. Mg(2+) serves as cofactor.

It localises to the cytoplasm. The enzyme catalyses tRNA(Lys) + L-lysine + ATP = L-lysyl-tRNA(Lys) + AMP + diphosphate. The sequence is that of Lysine--tRNA ligase from Haemophilus influenzae (strain PittEE).